The chain runs to 420 residues: Probable pectate lyase C (420 aa).

The N-terminal stretch at 1–20 is a signal peptide; that stretch reads MKLSAPLLVSLAAFSQAVTA. N-linked (GlcNAc...) asparagine glycans are attached at residues asparagine 49, asparagine 165, and asparagine 202. The active site involves arginine 205. Positions 262 to 297 constitute an EF-hand domain; it reads NANFHGYVQNNYYDPDKDGQLDGFELGVSSSNYGGV. Aspartate 275, aspartate 277, aspartate 279, glutamine 281, and glutamate 286 together coordinate Ca(2+). Residues 358-396 form a disordered region; sequence TMGGPGTLNGGTPAKDTDGDGIPDEAEKQLGTDPNTNDS. Residue asparagine 394 is glycosylated (N-linked (GlcNAc...) asparagine).

It belongs to the polysaccharide lyase 1 family. Requires Ca(2+) as cofactor.

The protein resides in the secreted. It catalyses the reaction Eliminative cleavage of (1-&gt;4)-alpha-D-galacturonan to give oligosaccharides with 4-deoxy-alpha-D-galact-4-enuronosyl groups at their non-reducing ends.. Pectinolytic enzyme consist of four classes of enzymes: pectin lyase, polygalacturonase, pectin methylesterase and rhamnogalacturonase. Among pectinolytic enzymes, pectin lyase is the most important in depolymerization of pectin, since it cleaves internal glycosidic bonds of highly methylated pectins. Favors pectate, the anion, over pectin, the methyl ester. This is Probable pectate lyase C (plyC) from Aspergillus fumigatus (strain CBS 144.89 / FGSC A1163 / CEA10) (Neosartorya fumigata).